The sequence spans 503 residues: Probable apyrase 4 (503 aa).

Low complexity predominate over residues 1–14 (MQRSNARSRSNINS). The tract at residues 1 to 39 (MQRSNARSRSNINSDMVDPPEVQTSPGNHRSSPSTAAKP) is disordered. Topologically, residues 1 to 45 (MQRSNARSRSNINSDMVDPPEVQTSPGNHRSSPSTAAKPKSKRTK) are cytoplasmic. Residues 46 to 66 (SIIFVIVACVTIALGLLFIGY) form a helical; Signal-anchor for type II membrane protein membrane-spanning segment. Topologically, residues 67–503 (SILRSGRNRR…DLSNVAKYKI (437 aa)) are extracellular. Position 83–93 (83–93 (VIIDGGSSGTR)) interacts with ATP. Glu-206 serves as the catalytic Proton acceptor. An ATP-binding site is contributed by 230 to 240 (GIVELGGASAQ). N-linked (GlcNAc...) asparagine glycans are attached at residues Asn-261, Asn-293, and Asn-338.

The protein belongs to the GDA1/CD39 NTPase family. It depends on Ca(2+) as a cofactor. In terms of tissue distribution, expressed both in the primary root and lateral root but not in the rosette leaves.

The protein resides in the membrane. It carries out the reaction a ribonucleoside 5'-triphosphate + 2 H2O = a ribonucleoside 5'-phosphate + 2 phosphate + 2 H(+). Catalyzes the hydrolysis of phosphoanhydride bonds of nucleoside tri- and di-phosphates. The chain is Probable apyrase 4 (APY4) from Arabidopsis thaliana (Mouse-ear cress).